The primary structure comprises 508 residues: Maturase K (508 aa).

The protein belongs to the intron maturase 2 family. MatK subfamily.

The protein localises to the plastid. It is found in the chloroplast. Its function is as follows. Usually encoded in the trnK tRNA gene intron. Probably assists in splicing its own and other chloroplast group II introns. This is Maturase K from Gordonia lasianthus (Loblolly bay).